The sequence spans 434 residues: UDP-N-acetylglucosamine 1-carboxyvinyltransferase 1 (434 aa).

22 to 23 (KN) contacts phosphoenolpyruvate. Arginine 93 lines the UDP-N-acetyl-alpha-D-glucosamine pocket. The active-site Proton donor is cysteine 117. 2-(S-cysteinyl)pyruvic acid O-phosphothioketal is present on cysteine 117. Residues 122–126 (RPIDQ), aspartate 306, and valine 328 contribute to the UDP-N-acetyl-alpha-D-glucosamine site.

The protein belongs to the EPSP synthase family. MurA subfamily.

The protein localises to the cytoplasm. It carries out the reaction phosphoenolpyruvate + UDP-N-acetyl-alpha-D-glucosamine = UDP-N-acetyl-3-O-(1-carboxyvinyl)-alpha-D-glucosamine + phosphate. Its pathway is cell wall biogenesis; peptidoglycan biosynthesis. In terms of biological role, cell wall formation. Adds enolpyruvyl to UDP-N-acetylglucosamine. This is UDP-N-acetylglucosamine 1-carboxyvinyltransferase 1 from Bacillus anthracis.